The primary structure comprises 186 residues: Ribosome-recycling factor (186 aa).

The protein belongs to the RRF family.

The protein resides in the cytoplasm. In terms of biological role, responsible for the release of ribosomes from messenger RNA at the termination of protein biosynthesis. May increase the efficiency of translation by recycling ribosomes from one round of translation to another. The sequence is that of Ribosome-recycling factor from Rickettsia africae (strain ESF-5).